A 246-amino-acid polypeptide reads, in one-letter code: Allergin-1 (246 aa).

Residues Met1–Ser33 form the signal peptide. Over Ile34–Ser150 the chain is Extracellular. The 80-residue stretch at Pro52–Ser131 folds into the Ig-like C2-type domain. Asn68 is a glycosylation site (N-linked (GlcNAc...) asparagine). Cysteines 73 and 120 form a disulfide. Residues Leu151–Ile171 form a helical membrane-spanning segment. Topologically, residues His172–His246 are cytoplasmic. 2 short sequence motifs (ITIM motif) span residues Ile214–Pro219 and Tyr239–Leu244. A phosphotyrosine mark is found at Tyr216 and Tyr241.

In terms of assembly, monomer. Interacts (tyrosine-phosphorylated) with PTPN6, PTPN11 and INPP5D. N-glycosylated. Expressed in myeloid cells (dendritic cells, macrophages and neutrophils but not in T-cells, B-cells or natural killer cells) and mast cells (at protein level).

The protein resides in the cell membrane. The protein localises to the secreted. Immunoglobulin-like receptor which plays an inhibitory role in degranulation of mast cells. Negatively regulates IgE-mediated mast cell activation and suppresses the type I immediate hypersensitivity reaction. This is Allergin-1 (Milr1) from Mus musculus (Mouse).